A 141-amino-acid chain; its full sequence is Large ribosomal subunit protein uL11 (141 aa).

The protein belongs to the universal ribosomal protein uL11 family. In terms of assembly, part of the ribosomal stalk of the 50S ribosomal subunit. Interacts with L10 and the large rRNA to form the base of the stalk. L10 forms an elongated spine to which L12 dimers bind in a sequential fashion forming a multimeric L10(L12)X complex. One or more lysine residues are methylated.

Forms part of the ribosomal stalk which helps the ribosome interact with GTP-bound translation factors. This Trichodesmium erythraeum (strain IMS101) protein is Large ribosomal subunit protein uL11.